Reading from the N-terminus, the 104-residue chain is L-rhamnose mutarotase (104 aa).

Tyrosine 18 contacts substrate. Residue histidine 22 is the Proton donor of the active site. Residues tyrosine 41 and 76-77 (WW) contribute to the substrate site.

This sequence belongs to the rhamnose mutarotase family. In terms of assembly, homodimer.

The protein localises to the cytoplasm. The catalysed reaction is alpha-L-rhamnose = beta-L-rhamnose. It functions in the pathway carbohydrate metabolism; L-rhamnose metabolism. Its function is as follows. Involved in the anomeric conversion of L-rhamnose. This chain is L-rhamnose mutarotase, found in Jannaschia sp. (strain CCS1).